The primary structure comprises 129 residues: Insulin-like growth factor 2 (129 aa).

An N-terminal signal peptide occupies residues 1–24 (MGVPMGKSLLAPLTFLALASCCFA). The segment at 25–52 (AYRPSETLCGGELVDTLQFVCGDRGFYF) is b. 3 cysteine pairs are disulfide-bonded: C33-C72, C45-C85, and C71-C76. A c region spans residues 53–65 (SRPASRVSRRSSR). Residues 66-86 (GIVEECCFRSCDLALLETYCA) form an a region. A d region spans residues 87–92 (TPAKSE). Residues 93 to 129 (RDVSTPPTVLPDNFPRYPVGKFFQYDTWKQSAQRLRR) constitute a propeptide, e peptide.

Belongs to the insulin family. As to quaternary structure, interacts with MYORG; this interaction is required for IGF2 secretion. Interacts with integrins ITGAV:ITGB3 and ITGA6:ITGB4; integrin-binding is required for IGF2 signaling. Proteolytically processed by PCSK4, proIGF2 is cleaved at Arg-129 and Arg-92 to generate big-IGF2 and mature IGF2.

It is found in the secreted. In terms of biological role, the insulin-like growth factors possess growth-promoting activity. Major fetal growth hormone in mammals. Plays a key role in regulating fetoplacental development. IGF2 is influenced by placental lactogen. Also involved in tissue differentiation. In adults, involved in glucose metabolism in adipose tissue, skeletal muscle and liver. Acts as a ligand for integrin which is required for IGF2 signaling. Positively regulates myogenic transcription factor MYOD1 function by facilitating the recruitment of transcriptional coactivators, thereby controlling muscle terminal differentiation. Inhibits myoblast differentiation and modulates metabolism via increasing the mitochondrial respiration rate. Preptin undergoes glucose-mediated co-secretion with insulin, and acts as a physiological amplifier of glucose-mediated insulin secretion. Exhibits osteogenic properties by increasing osteoblast mitogenic activity through phosphoactivation of MAPK1 and MAPK3. This chain is Insulin-like growth factor 2, found in Neovison vison (American mink).